The sequence spans 926 residues: MTSRFRLPAGRTYNVRASELARDRQHTEVVCNILLLDNTVQAFKVNKHDQGQVLLDVVFKHLDLTEQDYFGLQLADDSTDNPRWLDPNKPIRKQLKRGSPYSLNFRVKFFVSDPNKLQEEYTRYQYFLQIKQDILTGRLPCPSNTAALLASFAVQSELGDYDQSENLSGYLSDYSFIPNQPQDFEKEIAKLHQQHIGLSPAEAEFNYLNTARTLELYGVEFHYARDQSNNEIMIGVMSGGILIYKNRVRMNTFPWLKIVKISFKCKQFFIQLRKELHESRETLLGFNMVNYRACKNLWKACVEHHTFFRLDRPLPPQKNFFAHYFTLGSKFRYCGRTEVQSVQYGKEKANKDRVFARSPSKPLARKLMDWEVVSRNSISDDRLETQSLPSRSPPGTPNHRNSTFTQEGTRLRPSSVGHLVDHMVHTSPSEVFVNQRSPSSTQANSIVLESSPSQETPGDGKPPALPPKQSKKNSWNQIHYSHSQQDLESHINETFDIPSSPEKPTPNGGIPHDNLVLIRMKPDENGRFGFNVKGGYDQKMPVIVSRVAPGTPADLCVPRLNEGDQVVLINGRDIAEHTHDQVVLFIKASCERHSGELMLLVRPNAVYDVVEEKLENEPDFQYIPEKAPLDSVHQDDHSLRESMIQLAEGLITGTVLTQFDQLYRKKPGMTMSCAKLPQNISKNRYRDISPYDATRVILKGNEDYINANYINMEIPSSSIINQYIACQGPLPHTCTDFWQMTWEQGSSMVVMLTTQVERGRVKCHQYWPEPTGSSSYGCYQVTCHSEEGNTAYIFRKMTLFNQEKNESRPLTQIQYIAWPDHGVPDDSSDFLDFVCHVRNKRAGKEEPVVVHCSAGIGRTGVLITMETAMCLIECNQPVYPLDIVRTMRDQRAMMIQTPSQYRFVCEAILKVYEEGFVKPLTTSTNK.

One can recognise an FERM domain in the interval Val-29–Arg-312. Disordered regions lie at residues Asp-380 to Arg-412 and Glu-430 to Trp-475. 2 stretches are compositionally biased toward polar residues: residues Asn-398–Gly-408 and Glu-430–Thr-456. Ser-474 is subject to Phosphoserine. The PDZ domain maps to Leu-517 to Ser-589. One can recognise a Tyrosine-protein phosphatase domain in the interval Val-655–Val-911. Residues Asp-820, Cys-852–Arg-858, and Gln-896 contribute to the substrate site. The Phosphocysteine intermediate role is filled by Cys-852.

It belongs to the protein-tyrosine phosphatase family. Non-receptor class subfamily. In terms of assembly, interacts with MAPK12 (via C-terminus); this interaction abolishes PTPN4 catalytic autoinhibition and thus activates the phosphatase activity. As to quaternary structure, (Microbial infection) Interacts with attenuated rabies virus protein G; this interaction is required for virally-induced apoptosis. In terms of processing, highly phosphorylated on serine and threonine residues but not on tyrosines. Post-translationally, cleaved and activated by calpain I/CAPN1.

The protein resides in the cell membrane. Its subcellular location is the cytoplasm. The protein localises to the cytoskeleton. It carries out the reaction O-phospho-L-tyrosyl-[protein] + H2O = L-tyrosyl-[protein] + phosphate. Its function is as follows. Phosphatase that plays a role in immunity, learning, synaptic plasticity or cell homeostasis. Regulates neuronal cell homeostasis by protecting neurons against apoptosis. Negatively regulates TLR4-induced interferon beta production by dephosphorylating adapter TICAM2 and inhibiting subsequent TRAM-TRIF interaction. Also dephosphorylates the immunoreceptor tyrosine-based activation motifs/ITAMs of the TCR zeta subunit and thereby negatively regulates TCR-mediated signaling pathway. May act at junctions between the membrane and the cytoskeleton. The protein is Tyrosine-protein phosphatase non-receptor type 4 (PTPN4) of Homo sapiens (Human).